The sequence spans 192 residues: Peptide deformylase 1 (192 aa).

Fe cation contacts are provided by C101 and H143. The active site involves E144. H147 provides a ligand contact to Fe cation.

This sequence belongs to the polypeptide deformylase family. Fe(2+) is required as a cofactor.

It catalyses the reaction N-terminal N-formyl-L-methionyl-[peptide] + H2O = N-terminal L-methionyl-[peptide] + formate. Removes the formyl group from the N-terminal Met of newly synthesized proteins. Requires at least a dipeptide for an efficient rate of reaction. N-terminal L-methionine is a prerequisite for activity but the enzyme has broad specificity at other positions. The protein is Peptide deformylase 1 of Prochlorococcus marinus (strain MIT 9313).